The sequence spans 627 residues: Signal recognition particle subunit SRP68 (627 aa).

The interval 1–53 is disordered; sequence MAAEKQVPGGGGGGGSGGGGGSGGGGSGGGRGAGGEENKENERPSAGSKANKE. Over residues 8–33 the composition is skewed to gly residues; it reads PGGGGGGGSGGGGGSGGGGSGGGRGA. Basic and acidic residues predominate over residues 34–43; that stretch reads GGEENKENER. Serine 48 and serine 241 each carry phosphoserine. The RNA-binding stretch occupies residues 52–252; sequence KEFGDSLSLE…NIRYCAYNIG (201 aa). The residue at position 452 (lysine 452) is an N6-acetyllysine. Residues 588 to 610 are required for interaction with SRP72; the sequence is PLFFDLALNHVAFPPLEDKLEQK.

It belongs to the SRP68 family. As to quaternary structure, heterodimer with SRP72. SRP68/SRP72 heterodimer formation is stabilized by the presence of 7SL RNA. Component of a signal recognition particle (SRP) complex that consists of a 7SL RNA molecule of 300 nucleotides and six protein subunits: SRP72, SRP68, SRP54, SRP19, SRP14 and SRP9. Within the SRP complex, interacts (via C-terminus) with SRP72 (via N-terminus).

The protein resides in the cytoplasm. It is found in the nucleus. It localises to the nucleolus. The protein localises to the endoplasmic reticulum. In terms of biological role, component of the signal recognition particle (SRP) complex, a ribonucleoprotein complex that mediates the cotranslational targeting of secretory and membrane proteins to the endoplasmic reticulum (ER). The SRP complex interacts with the signal sequence in nascent secretory and membrane proteins and directs them to the membrane of the ER. The SRP complex targets the ribosome-nascent chain complex to the SRP receptor (SR), which is anchored in the ER, where SR compaction and GTPase rearrangement drive cotranslational protein translocation into the ER. Binds the signal recognition particle RNA (7SL RNA), SRP72 binds to this complex subsequently. The SRP complex possibly participates in the elongation arrest function. This is Signal recognition particle subunit SRP68 (SRP68) from Homo sapiens (Human).